Here is a 364-residue protein sequence, read N- to C-terminus: Aminomethyltransferase (364 aa).

This sequence belongs to the GcvT family. The glycine cleavage system is composed of four proteins: P, T, L and H.

The enzyme catalyses N(6)-[(R)-S(8)-aminomethyldihydrolipoyl]-L-lysyl-[protein] + (6S)-5,6,7,8-tetrahydrofolate = N(6)-[(R)-dihydrolipoyl]-L-lysyl-[protein] + (6R)-5,10-methylene-5,6,7,8-tetrahydrofolate + NH4(+). Its function is as follows. The glycine cleavage system catalyzes the degradation of glycine. The protein is Aminomethyltransferase of Salmonella paratyphi C (strain RKS4594).